The primary structure comprises 274 residues: MRKVAIYGKGGIGKSTTTQNTVAGLAEMGKKVMVVGCDPKADSTRLLLGGLQQKTVLDTLREEGEEVELEDIIKEGYRNTRCTESGGPEPGVGCAGRGIITSVNLLEQLGAYDEEWDLDYVFYDVLGDVVCGGFAMPIRDGKAEEIYIVCSGEMMAMYAANNICKGILKYADAGGVRLGGLICNSRKVDNEREMIEELARKIGTQMIHFVPRDNFVQRAEINRKTVIDYDPTHGQADEYRALARKIDENEMFVIPKPLEIEELESLLIEFGIAN.

8-15 contacts ATP; sequence GKGGIGKS. Cys-94 serves as a coordination point for [4Fe-4S] cluster. Arg-97 carries the post-translational modification ADP-ribosylarginine; by dinitrogenase reductase ADP-ribosyltransferase. Cys-131 serves as a coordination point for [4Fe-4S] cluster.

It belongs to the NifH/BchL/ChlL family. In terms of assembly, homodimer. [4Fe-4S] cluster is required as a cofactor. Post-translationally, the reversible ADP-ribosylation of Arg-97 inactivates the nitrogenase reductase and regulates nitrogenase activity.

It catalyses the reaction N2 + 8 reduced [2Fe-2S]-[ferredoxin] + 16 ATP + 16 H2O = H2 + 8 oxidized [2Fe-2S]-[ferredoxin] + 2 NH4(+) + 16 ADP + 16 phosphate + 6 H(+). The key enzymatic reactions in nitrogen fixation are catalyzed by the nitrogenase complex, which has 2 components: the iron protein and the molybdenum-iron protein. This Chlorobium luteolum (strain DSM 273 / BCRC 81028 / 2530) (Pelodictyon luteolum) protein is Nitrogenase iron protein.